The chain runs to 1080 residues: Histone-lysine N-methyltransferase, H3 lysine-4 specific (1080 aa).

Disordered regions lie at residues 1-46 (MSNY…SQYN), 54-73 (NDGTRRRYNDDRPHSSNNAS), and 78-121 (YATN…SSGS). A binds SWD2 region spans residues 1-230 (MSNYYRRAHA…THRKCRNSLI (230 aa)). Positions 11 to 28 (SSGSYRQPQEQPQYSRSG) are enriched in polar residues. Over residues 29 to 46 (HYQYSNGHSHQQYSSQYN) the composition is skewed to low complexity. Positions 54 to 67 (NDGTRRRYNDDRPH) are enriched in basic and acidic residues. Polar residues-rich tracts occupy residues 78–87 (YATNNSQSGP) and 99–121 (RGMSQSRYSNSNVHNTLASSSGS). Positions 230–569 (ILLPRISYDR…ALDHANFPEL (340 aa)) are binds RNA. The tract at residues 356–569 (KKLQKLQENL…ALDHANFPEL (214 aa)) is binds SHG1. Serine 625 carries the post-translational modification Phosphoserine. Residues 646–729 (AHLLNEETDS…DQNGSSDVLD (84 aa)) are disordered. A compositionally biased stretch (acidic residues) spans 674-692 (DEEDENMTSSSSEEEEEEA). Residues 693–712 (PDKKFKSESEPTTPESDHLH) show a composition bias toward basic and acidic residues. The tract at residues 762–938 (MDLQNAIKDE…SLNQLNKRKK (177 aa)) is binds SPP1. The interval 762-938 (MDLQNAIKDE…SLNQLNKRKK (177 aa)) is contributes to RNA binding. The interval 762-938 (MDLQNAIKDE…SLNQLNKRKK (177 aa)) is required for catalytic activity. Phosphothreonine is present on threonine 875. Composition is skewed to basic and acidic residues over residues 877-890 (ELCQREESSNKEPS) and 899-909 (SSRDNRASNRR). A disordered region spans residues 877-909 (ELCQREESSNKEPSDSVPQEVSSSRDNRASNRR). Positions 904–909 (RASNRR) match the RxxxRR motif motif. One can recognise an SET domain in the interval 938 to 1055 (KPVMFARSAI…ASEELTYDYK (118 aa)). An S-adenosyl-L-methionine-binding site is contributed by tyrosine 1054. In terms of domain architecture, Post-SET spans 1064–1080 (ERLPCLCGAPNCKGFLN).

Belongs to the class V-like SAM-binding methyltransferase superfamily. Component of the Set1C/COMPASS complex which consists of SET1(2), BRE2(2), SPP1(2), SDC1(1), SHG1(1), SWD1(1), SWD2(1), and SWD3(1). Interacts with MEC3.

The protein resides in the nucleus. Its subcellular location is the chromosome. The enzyme catalyses L-lysyl(4)-[histone H3] + 3 S-adenosyl-L-methionine = N(6),N(6),N(6)-trimethyl-L-lysyl(4)-[histone H3] + 3 S-adenosyl-L-homocysteine + 3 H(+). It carries out the reaction N(6)-methyl-L-lysyl(4)-[histone H3] + S-adenosyl-L-methionine = N(6),N(6)-dimethyl-L-lysyl(4)-[histone H3] + S-adenosyl-L-homocysteine + H(+). The catalysed reaction is N(6),N(6)-dimethyl-L-lysyl(4)-[histone H3] + S-adenosyl-L-methionine = N(6),N(6),N(6)-trimethyl-L-lysyl(4)-[histone H3] + S-adenosyl-L-homocysteine + H(+). Catalytic component of the COMPASS (Set1C) complex that specifically mono-, di- and trimethylates histone H3 to form H3K4me1/2/3. Binds RNAs involved in chromosome segregation, splicing and transcriptional regulation; appears to bind transcripts both co- and post-transcriptionally and binding might negatively affect its histone methyltransferase activity. COMPASS recognizes ubiquitinated H2B on one face of the nucleosome which stimulates the methylation of H3 on the opposing face. Plays a role in telomere length maintenance and transcription elongation regulation. This is Histone-lysine N-methyltransferase, H3 lysine-4 specific from Saccharomyces cerevisiae (strain ATCC 204508 / S288c) (Baker's yeast).